A 785-amino-acid chain; its full sequence is SUN domain-containing protein 1 (785 aa).

The interval 1–138 (MDFSRLHMYS…TRRPPVLDES (138 aa)) is LMNA-binding. The Nuclear portion of the chain corresponds to 1–288 (MDFSRLHMYS…VFLLTRCLRN (288 aa)). 3 positions are modified to phosphoserine: Ser48, Ser100, and Ser138. Lys195 participates in a covalent cross-link: Glycyl lysine isopeptide (Lys-Gly) (interchain with G-Cter in SUMO2). The tract at residues 209 to 309 (SRVYSRDRNQ…FLLLAGLSLR (101 aa)) is SYNE2-binding. Residues 223 to 309 (LLQILRRIGA…FLLLAGLSLR (87 aa)) are EMD-binding. Residues 289-308 (ICKFLVLLIPLFLLLAGLSL) form a helical membrane-spanning segment. Residues 309 to 785 (RGQGNFFSFL…RFRVHGEPVK (477 aa)) lie on the Perinuclear space side of the membrane. 2 positions are modified to phosphoserine: Asp333 and Ser344. Residues 428 to 495 (HQEHEVRMSH…KSELSSWRHV (68 aa)) are a coiled coil. The tract at residues 574–785 (TSEAVVSAVS…RFRVHGEPVK (212 aa)) is sufficient for interaction with SYNE1 and SYNE2. The SUN domain occupies 622 to 784 (GGSILSTRCS…YRFRVHGEPV (163 aa)).

Core component of the LINC complex which is composed of inner nuclear membrane SUN domain-containing proteins coupled to outer nuclear membrane KASH domain-containing nesprins. SUN and KASH domain-containing proteins seem to bind each other promiscuously; however, differentially expression of LINC complex constituents is giving rise to specific assemblies. At least SUN1/2-containing core LINC complexes are proposed to be hexameric composed of three protomers of each KASH and SUN domain-containing protein. Interacts with KASH5 (via the last 22 amino acids); this interaction mediates KASH5 telomere localization by forming a SUN1:KASH5 LINC complex. May interact with SYNE3. Interacts with SYNE2 and SYNE1; probably forming respective LINC complexes. Interacts with A-type lamin with a strong preference for unprocessed A-type lamin compared with the mature protein. Interaction with lamins B1 and C is hardly detectable. Interacts with NAT10. Interacts with EMD and TSNAX. Associates with the nuclear pore complex (NPC). Interacts with CCDC79/TERB1; promoting the accumulation of the LINC complex complexes at the telomere-nuclear envelope attachment sites. Interacts (via KASH domain) with TMEM258. Post-translationally, the disulfide bond with KASH domain-containing nesprins is required for stability of the respective LINC complexes under tensile forces.

It localises to the nucleus inner membrane. In terms of biological role, as a component of the LINC (LInker of Nucleoskeleton and Cytoskeleton) complex involved in the connection between the nuclear lamina and the cytoskeleton. The nucleocytoplasmic interactions established by the LINC complex play an important role in the transmission of mechanical forces across the nuclear envelope and in nuclear movement and positioning. Required for interkinetic nuclear migration (INM) and essential for nucleokinesis and centrosome-nucleus coupling during radial neuronal migration in the cerebral cortex and during glial migration. Involved in telomere attachment to nuclear envelope in the prophase of meiosis implicating a SUN1/2:KASH5 LINC complex in which SUN1 and SUN2 seem to act at least partial redundantly. Required for gametogenesis and involved in selective gene expression of coding and non-coding RNAs needed for gametogenesis. Helps to define the distribution of nuclear pore complexes (NPCs). Required for efficient localization of SYNE4 in the nuclear envelope. May be involved in nuclear remodeling during sperm head formation in spermatogenesis. May play a role in DNA repair by suppressing non-homologous end joining repair to facilitate the repair of DNA cross-links. The polypeptide is SUN domain-containing protein 1 (Homo sapiens (Human)).